We begin with the raw amino-acid sequence, 161 residues long: Endoribonuclease YbeY (161 aa).

The Zn(2+) site is built by His121, His125, and His131.

The protein belongs to the endoribonuclease YbeY family. The cofactor is Zn(2+).

The protein localises to the cytoplasm. Its function is as follows. Single strand-specific metallo-endoribonuclease involved in late-stage 70S ribosome quality control and in maturation of the 3' terminus of the 16S rRNA. The sequence is that of Endoribonuclease YbeY from Bordetella avium (strain 197N).